The primary structure comprises 365 residues: MAVMAPRTLVLLLSGALALTQTWAGSHSMRYFSTSVSRPGRGEPRFIAVGYVDDTQFVRFDSDAASQRMEPRAPWIEQEGPEYWDRNTRNVKAHSQTDRVDLGTLRGYYNQSEDGSHTIQRMYGCDVGSDGRFLRGYQQDAYDGKDYIALNEDLRSWTAADMAAEITKRKWEAAHFAEQLRAYLEGTCVEWLRRHLENGKETLQRTDAPKTHMTHHAVSDHEAILRCWALSFYPAEITLTWQRDGEDQTQDTELVETRPAGDGTFQKWAAVVVPSGQEQRYTCHVQHEGLPEPLTLRWEPSSQPTIPIVGIIAGLVLFGAVIAGAVVAAVRWRRKSSDRKGGSYSQAASSDSAQGSDVSLTACKV.

An N-terminal signal peptide occupies residues 1-24 (MAVMAPRTLVLLLSGALALTQTWA). Residues 25–114 (GSHSMRYFST…LRGYYNQSED (90 aa)) form an alpha-1 region. Topologically, residues 25–308 (GSHSMRYFST…EPSSQPTIPI (284 aa)) are extracellular. A glycan (N-linked (GlcNAc...) asparagine) is linked at Asn-110. An alpha-2 region spans residues 115 to 206 (GSHTIQRMYG…ENGKETLQRT (92 aa)). Cystine bridges form between Cys-125/Cys-188 and Cys-227/Cys-283. An alpha-3 region spans residues 207 to 298 (DAPKTHMTHH…GLPEPLTLRW (92 aa)). Positions 209-297 (PKTHMTHHAV…EGLPEPLTLR (89 aa)) constitute an Ig-like C1-type domain. The connecting peptide stretch occupies residues 299-308 (EPSSQPTIPI). Residues 309–332 (VGIIAGLVLFGAVIAGAVVAAVRW) form a helical membrane-spanning segment. Residues 333 to 365 (RRKSSDRKGGSYSQAASSDSAQGSDVSLTACKV) are Cytoplasmic-facing. A disordered region spans residues 338–365 (DRKGGSYSQAASSDSAQGSDVSLTACKV). Residues 342-359 (GSYSQAASSDSAQGSDVS) are compositionally biased toward low complexity. Position 343 is a phosphoserine (Ser-343). Tyr-344 carries the post-translational modification Phosphotyrosine. Residues Ser-345, Ser-349, Ser-350, Ser-352, Ser-356, and Ser-359 each carry the phosphoserine modification.

The protein belongs to the MHC class I family. In terms of assembly, heterodimer of an alpha chain and a beta chain (beta-2-microglobulin).

The protein resides in the membrane. In terms of biological role, involved in the presentation of foreign antigens to the immune system. The protein is Class I histocompatibility antigen, Gogo-A*0101 alpha chain of Gorilla gorilla gorilla (Western lowland gorilla).